The primary structure comprises 700 residues: Putative ankyrin repeat protein FPV018 (700 aa).

11 ANK repeats span residues Asp-29–Met-59, Asn-63–Gly-92, Arg-126–Met-155, Met-204–Thr-233, Ala-236–Ser-265, Asn-270–Ile-299, Asp-301–Cys-332, Cys-395–Val-424, Tyr-428–Glu-457, Tyr-461–Gln-490, and Asp-494–Phe-523.

This Fowlpox virus (strain NVSL) (FPV) protein is Putative ankyrin repeat protein FPV018.